Consider the following 101-residue polypeptide: Apolipoprotein C-II (101 aa).

The N-terminal stretch at 1 to 22 is a signal peptide; it reads MGTRCLLVLLLVLLVLRCDVQG. Positions 23–28 are cleaved as a propeptide — removed in mature form; that stretch reads DDMARQ. The segment at 66–74 is lipid binding; sequence AVDEKIRDM. The segment at 78–101 is lipoprotein lipase cofactor; the sequence is STAAVRIYTGILTDQILSMLSGDS.

It belongs to the apolipoprotein C2 family. Proapolipoprotein C-II is synthesized as a sialic acid containing glycoprotein which is subsequently desialylated prior to its proteolytic processing. Post-translationally, proapolipoprotein C-II, the major form found in plasma undergoes proteolytic cleavage of its N-terminal hexapeptide to generate the mature form apolipoprotein C-II, which occurs as the minor form in plasma.

It localises to the secreted. In terms of biological role, component of chylomicrons, very low-density lipoproteins (VLDL), low-density lipoproteins (LDL), and high-density lipoproteins (HDL) in plasma. Plays an important role in lipoprotein metabolism as an activator of lipoprotein lipase, the enzyme which hydrolyzes the triacylglycerols on chylomicrons and VLDL. The polypeptide is Apolipoprotein C-II (APOC2) (Acinonyx jubatus (Cheetah)).